The sequence spans 416 residues: Gamma-glutamyl phosphate reductase (416 aa).

The protein belongs to the gamma-glutamyl phosphate reductase family.

The protein localises to the cytoplasm. It catalyses the reaction L-glutamate 5-semialdehyde + phosphate + NADP(+) = L-glutamyl 5-phosphate + NADPH + H(+). Its pathway is amino-acid biosynthesis; L-proline biosynthesis; L-glutamate 5-semialdehyde from L-glutamate: step 2/2. Catalyzes the NADPH-dependent reduction of L-glutamate 5-phosphate into L-glutamate 5-semialdehyde and phosphate. The product spontaneously undergoes cyclization to form 1-pyrroline-5-carboxylate. The polypeptide is Gamma-glutamyl phosphate reductase (Salmonella arizonae (strain ATCC BAA-731 / CDC346-86 / RSK2980)).